Reading from the N-terminus, the 470-residue chain is Desmin (470 aa).

The head stretch occupies residues 2–108 (SQAYSSSQRV…QEFLTTRTNE (107 aa)). A Phosphoserine; by CDK1 modification is found at S7. S12 is modified (phosphoserine; by AURKB). Residue R16 is modified to Omega-N-methylarginine. Position 17 is a phosphothreonine; by AURKB and ROCK1 (T17). S28 is subject to Phosphoserine; by CDK1. S31 bears the Phosphoserine mark. S32 carries the phosphoserine; by CDK1 modification. Position 37 is an asymmetric dimethylarginine; alternate (R37). An Omega-N-methylarginine; alternate modification is found at R37. S45 is modified (phosphoserine). The residue at position 58 (R58) is an ADP-ribosylarginine. S60 is subject to Phosphoserine; by AURKB. A Phosphoserine modification is found at S68. An Omega-N-methylarginine modification is found at R70. 2 positions are modified to phosphothreonine; by ROCK1: T76 and T77. Position 81 is a phosphoserine (S81). One can recognise an IF rod domain in the interval 108 to 416 (EKVELQELND…KLLEGEESRI (309 aa)). Positions 109 to 141 (KVELQELNDRFANYIEKVRFLEQQNAALAAEVN) are coil 1A. The linker 1 stretch occupies residues 142-151 (RLKGREPTRV). The segment at 152–252 (AELYEEELRE…HEEEIRELQA (101 aa)) is coil 1B. Residues 253–268 (QLQEQQVQVEMDMSKP) form a linker 12 region. The interaction with NEB stretch occupies residues 268 to 415 (PDLTAALRDI…RKLLEGEESR (148 aa)). Residues 269-287 (DLTAALRDIRAQYETIAAK) are coil 2A. The interval 288–295 (NISEAEEW) is linker 2. Residues S290, S358, S361, and S424 each carry the phosphoserine modification. Residues 296–412 (YKSKVSDLTQ…ATYRKLLEGE (117 aa)) are coil 2B. The tract at residues 413-470 (ESRINLPIQTYSALNFRETSPEQRGSEVHTKKTVMIKTIETRDGEVVSEATQQQHEVL) is tail. The interaction with CRYAB stretch occupies residues 438–453 (SEVHTKKTVMIKTIET).

Belongs to the intermediate filament family. Homomer. Interacts with DST. Interacts with MTM1. Interacts with EPPK1; interaction is dependent of higher-order structure of intermediate filament. Interacts with CRYAB. Interacts with NEB (via nebulin repeats 160-164). Interacts (via rod region) with NEBL (via nebulin repeats 1-5). Interacts with ASB2 isoform 1; the interaction targets DES for proteasomal degradation. Interacts with PLEC isoform 1C. Interacts with PKP1. Interacts with FLII. ADP-ribosylation prevents ability to form intermediate filaments. Post-translationally, phosphorylation at Ser-7, Ser-28 and Ser-32 by CDK1, phosphorylation at Ser-60 by AURKB and phosphorylation at Thr-76 by ROCK1 contribute to efficient separation of desmin intermediate filaments during mitosis. In terms of processing, ubiquitination by a SCF-like complex containing ASB2 isoform 1 leads to proteasomal degradation.

The protein localises to the cytoplasm. The protein resides in the myofibril. It localises to the sarcomere. Its subcellular location is the z line. It is found in the cell membrane. The protein localises to the sarcolemma. The protein resides in the nucleus. It localises to the cell tip. Its subcellular location is the nucleus envelope. Its function is as follows. Muscle-specific type III intermediate filament essential for proper muscular structure and function. Plays a crucial role in maintaining the structure of sarcomeres, inter-connecting the Z-disks and forming the myofibrils, linking them not only to the sarcolemmal cytoskeleton, but also to the nucleus and mitochondria, thus providing strength for the muscle fiber during activity. In adult striated muscle they form a fibrous network connecting myofibrils to each other and to the plasma membrane from the periphery of the Z-line structures. May act as a sarcomeric microtubule-anchoring protein: specifically associates with detyrosinated tubulin-alpha chains, leading to buckled microtubules and mechanical resistance to contraction. Required for nuclear membrane integrity, via anchoring at the cell tip and nuclear envelope, resulting in maintenance of microtubule-derived intracellular mechanical forces. Contributes to the transcriptional regulation of the NKX2-5 gene in cardiac progenitor cells during a short period of cardiomyogenesis and in cardiac side population stem cells in the adult. Plays a role in maintaining an optimal conformation of nebulette (NEB) on heart muscle sarcomeres to bind and recruit cardiac alpha-actin. The polypeptide is Desmin (DES) (Homo sapiens (Human)).